The sequence spans 155 residues: Superoxide dismutase [Cu-Zn] (155 aa).

3 residues coordinate Cu cation: His47, His49, and His64. The cysteines at positions 58 and 147 are disulfide-linked. Zn(2+) is bound by residues His64, His72, His81, and Asp84. His121 is a Cu cation binding site. Substrate is bound at residue Arg144.

Belongs to the Cu-Zn superoxide dismutase family. In terms of assembly, homodimer. It depends on Cu cation as a cofactor. Requires Zn(2+) as cofactor.

The protein resides in the cytoplasm. It catalyses the reaction 2 superoxide + 2 H(+) = H2O2 + O2. Functionally, destroys radicals which are normally produced within the cells and which are toxic to biological systems. This chain is Superoxide dismutase [Cu-Zn] (SOD1), found in Kluyveromyces lactis (strain ATCC 8585 / CBS 2359 / DSM 70799 / NBRC 1267 / NRRL Y-1140 / WM37) (Yeast).